A 468-amino-acid chain; its full sequence is UDP-N-acetylmuramate--L-alanine ligase (468 aa).

114–120 (GTHGKTT) provides a ligand contact to ATP.

It belongs to the MurCDEF family.

Its subcellular location is the cytoplasm. The catalysed reaction is UDP-N-acetyl-alpha-D-muramate + L-alanine + ATP = UDP-N-acetyl-alpha-D-muramoyl-L-alanine + ADP + phosphate + H(+). It participates in cell wall biogenesis; peptidoglycan biosynthesis. Cell wall formation. This chain is UDP-N-acetylmuramate--L-alanine ligase, found in Brucella anthropi (strain ATCC 49188 / DSM 6882 / CCUG 24695 / JCM 21032 / LMG 3331 / NBRC 15819 / NCTC 12168 / Alc 37) (Ochrobactrum anthropi).